The chain runs to 624 residues: Phosphomethylpyrimidine synthase (624 aa).

Residues 40 to 61 (VPMRKISQSDTPTNTGREKNPP) are disordered. The span at 45 to 54 (ISQSDTPTNT) shows a compositional bias: polar residues. Substrate is bound by residues Asn229, Met258, Tyr287, His323, 343-345 (SRG), 384-387 (DGLR), and Glu423. Residue His427 participates in Zn(2+) binding. Position 450 (Tyr450) interacts with substrate. Residue His491 participates in Zn(2+) binding. Positions 571, 574, and 579 each coordinate [4Fe-4S] cluster.

This sequence belongs to the ThiC family. Homodimer. It depends on [4Fe-4S] cluster as a cofactor.

It catalyses the reaction 5-amino-1-(5-phospho-beta-D-ribosyl)imidazole + S-adenosyl-L-methionine = 4-amino-2-methyl-5-(phosphooxymethyl)pyrimidine + CO + 5'-deoxyadenosine + formate + L-methionine + 3 H(+). It functions in the pathway cofactor biosynthesis; thiamine diphosphate biosynthesis. In terms of biological role, catalyzes the synthesis of the hydroxymethylpyrimidine phosphate (HMP-P) moiety of thiamine from aminoimidazole ribotide (AIR) in a radical S-adenosyl-L-methionine (SAM)-dependent reaction. In Methylococcus capsulatus (strain ATCC 33009 / NCIMB 11132 / Bath), this protein is Phosphomethylpyrimidine synthase.